The following is a 102-amino-acid chain: Large ribosomal subunit protein bL21 (102 aa).

Belongs to the bacterial ribosomal protein bL21 family. Part of the 50S ribosomal subunit. Contacts protein L20.

Functionally, this protein binds to 23S rRNA in the presence of protein L20. In Staphylococcus haemolyticus (strain JCSC1435), this protein is Large ribosomal subunit protein bL21.